We begin with the raw amino-acid sequence, 253 residues long: MKVIITVNYEEMSKKAAEIVKKQIKEKPNTVLGLATGSTPLGMYKHLIEMYKRGEIDFSNVITFNLDEYIGLSPDHPQSYHYFMFHNFFNHINIKKENVHIPNGIAEDLEEECRKYEEEIEKAGGIDLQILGIGINGHIGFNEPDESIETKTHVVTLTEKTINANKRFFKSAEEVPRKAITMGLGSIMKAKKIVLLASGKNKAEAIKETIKGQLTTKVPATVLALHPDVTIIIDKEAASLIPDEDLKEIEVIV.

Aspartate 67 (proton acceptor; for enolization step) is an active-site residue. Asparagine 136 acts as the For ring-opening step in catalysis. Histidine 138 serves as the catalytic Proton acceptor; for ring-opening step. Glutamate 143 functions as the For ring-opening step in the catalytic mechanism.

This sequence belongs to the glucosamine/galactosamine-6-phosphate isomerase family. NagB subfamily.

The enzyme catalyses alpha-D-glucosamine 6-phosphate + H2O = beta-D-fructose 6-phosphate + NH4(+). It participates in amino-sugar metabolism; N-acetylneuraminate degradation; D-fructose 6-phosphate from N-acetylneuraminate: step 5/5. In terms of biological role, catalyzes the reversible isomerization-deamination of glucosamine 6-phosphate (GlcN6P) to form fructose 6-phosphate (Fru6P) and ammonium ion. The chain is Glucosamine-6-phosphate deaminase from Thermoanaerobacter pseudethanolicus (strain ATCC 33223 / 39E) (Clostridium thermohydrosulfuricum).